A 159-amino-acid chain; its full sequence is Aspartate carbamoyltransferase regulatory chain (159 aa).

Residues cysteine 111, cysteine 116, cysteine 141, and cysteine 144 each coordinate Zn(2+).

Belongs to the PyrI family. In terms of assembly, contains catalytic and regulatory chains. Zn(2+) is required as a cofactor.

In terms of biological role, involved in allosteric regulation of aspartate carbamoyltransferase. The protein is Aspartate carbamoyltransferase regulatory chain of Aeropyrum pernix (strain ATCC 700893 / DSM 11879 / JCM 9820 / NBRC 100138 / K1).